Reading from the N-terminus, the 865-residue chain is Xylosyltransferase 2 (865 aa).

Topologically, residues 1–15 (MVASARVQKLVRRYK) are cytoplasmic. The helical; Signal-anchor for type II membrane protein transmembrane segment at 16–36 (LAIATALAILLLQGLVVWSFS) threads the bilayer. Residues 37-865 (GLEEDEAGEK…GPVKADGRLR (829 aa)) lie on the Lumenal side of the membrane. A disordered region spans residues 41 to 157 (DEAGEKGRQR…EGAPQPTDNG (117 aa)). Residues 53–65 (RPLDPGEGSKDTD) are compositionally biased toward basic and acidic residues. Residues 73–82 (STGRRHGRWR) are compositionally biased toward basic residues. Asn122 carries N-linked (GlcNAc...) asparagine glycosylation. Residues 125–137 (GAAAGEALVGAAG) show a composition bias toward low complexity. Cystine bridges form between Cys162-Cys190, Cys206-Cys448, Cys467-Cys480, and Cys469-Cys478. UDP-alpha-D-xylose contacts are provided by residues Val239, Asp267, and 296–298 (TIW). Asn327 carries an N-linked (GlcNAc...) asparagine glycan. Residue 400-401 (DW) coordinates UDP-alpha-D-xylose. Residues Ser481 and 504-505 (RK) contribute to the UDP-alpha-D-xylose site. 2 disulfide bridges follow: Cys581-Cys833 and Cys826-Cys839. A glycan (N-linked (GlcNAc...) asparagine) is linked at Asn683. The interval 846–865 (SLSPDPKSELGPVKADGRLR) is disordered.

The protein belongs to the glycosyltransferase 14 family. XylT subfamily. As to quaternary structure, monomer. The cofactor is Mg(2+). Mn(2+) is required as a cofactor. Contains disulfide bonds.

The protein resides in the golgi apparatus membrane. It localises to the secreted. The catalysed reaction is UDP-alpha-D-xylose + L-seryl-[protein] = 3-O-(beta-D-xylosyl)-L-seryl-[protein] + UDP + H(+). It participates in glycan metabolism; chondroitin sulfate biosynthesis. The protein operates within glycan metabolism; heparan sulfate biosynthesis. In terms of biological role, catalyzes the first step in the biosynthesis of chondroitin sulfate, heparan sulfate and dermatan sulfate proteoglycans, such as DCN. Transfers D-xylose from UDP-D-xylose to specific serine residues of the core protein. The sequence is that of Xylosyltransferase 2 (XYLT2) from Pan troglodytes (Chimpanzee).